A 394-amino-acid polypeptide reads, in one-letter code: NAC domain-containing protein 3 (394 aa).

Positions 3–147 (TPVGLRFCPT…TYTLCKVMFN (145 aa)) constitute an NAC domain. Residues 104-153 (IGEKKILMFYTSKESKSDWVIHEYHGFSHNQMMMTYTLCKVMFNGGMREK) mediate DNA binding. Disordered stretches follow at residues 152–173 (EKSS…RRDS) and 264–300 (NSLT…CDSF). The span at 155–165 (SSSPSSSGVSG) shows a compositional bias: low complexity. Residues 286–300 (PKTNSIQTSSTCDSF) show a composition bias toward polar residues.

Its subcellular location is the nucleus. In Arabidopsis thaliana (Mouse-ear cress), this protein is NAC domain-containing protein 3 (NAC003).